The primary structure comprises 4043 residues: Hybrid PKS-NRPS synthetase thnA (4043 aa).

The region spanning 6–440 (LEPIAIVGSA…GSNAHAILEE (435 aa)) is the Ketosynthase family 3 (KS3) domain. Residues C179, H319, and H360 each act as for beta-ketoacyl synthase activity in the active site. Residues 558-894 (VFTGQGAQWA…FSDALGFVWT (337 aa)) form a malonyl-CoA:ACP transacylase (MAT) domain region. The tract at residues 952–1090 (HEILGTILPE…ATVKIILGTP (139 aa)) is N-terminal hotdog fold. A dehydratase (DH) domain region spans residues 952 to 1256 (HEILGTILPE…LSIKTFAPAT (305 aa)). Residues 952-1258 (HEILGTILPE…IKTFAPATQA (307 aa)) form the PKS/mFAS DH domain. H984 (proton acceptor; for dehydratase activity) is an active-site residue. Positions 1105 to 1258 (LFPIDADRFY…IKTFAPATQA (154 aa)) are C-terminal hotdog fold. D1166 (proton donor; for dehydratase activity) is an active-site residue. The interval 1417–1591 (LASMMKQITH…RKAGFAGVDA (175 aa)) is methyltransferase (MT) domain. The segment at 2146-2320 (TYLLVGLTGK…GSTFDIGQVA (175 aa)) is ketoreductase (KR) domain. The Carrier 1 domain maps to 2434 to 2512 (EQALDILKEC…ELCDRVVDKL (79 aa)). S2472 carries the post-translational modification O-(pantetheine 4'-phosphoryl)serine. The interval 2521 to 2618 (GKQGESQPPA…PPPPEPAVER (98 aa)) is disordered. Residues 2527-2536 (QPPASTAQPQ) are compositionally biased toward low complexity. A compositionally biased stretch (pro residues) spans 2537–2547 (PVAPKPKPLPV). Residues 2578 to 2605 (YSATEASTRSGSPSEATRLSQKVSSKLQ) are compositionally biased toward polar residues. The condensation (C) domain stretch occupies residues 2626–3067 (IKSVPISLGQ…IPRFSEKQLA (442 aa)). The adenylation (A) domain stretch occupies residues 3092–3496 (QVARENPDKV…GTMVFHSRMA (405 aa)). In terms of domain architecture, Carrier 2 spans 3614-3695 (TELTETMIQL…EMAQKVEETI (82 aa)). S3655 is subject to O-(pantetheine 4'-phosphoryl)serine. Positions 3736 to 3954 (ITGATGFLSK…DMLPAVLTAQ (219 aa)) are reductase (R) domain.

In the C-terminal section; belongs to the NRP synthetase family.

The catalysed reaction is malate + 6 malonyl-CoA + acetyl-CoA + 2 AH2 + 2 S-adenosyl-L-methionine + 5 NADPH + 9 H(+) = trihazone A + 2 A + 2 S-adenosyl-L-homocysteine + 6 CO2 + 5 NADP(+) + 7 CoA + 6 H2O. It functions in the pathway secondary metabolite biosynthesis. Hybrid PKS-NRPS synthetase; part of the gene cluster that produces the tetronate natural products trihazones. The PKS-NRPS synthetase thnA with the help of the trans-enoyl reductase thnE are responsible for the synthesis of the carboxylmethyl containing trihazone A. The PKS portion of thnA synthesizes beta-keto-triene chain from one acetyl-CoA and 6 equivalents of malonyl-CoA, in collaboration with thnE, which selectively reduces the enoyl intermediate during the first and fourth iteration of the PKS. The NRPS domain selects and activates malate, of which the alpha-hydroxyl group attacks the completed polyketide acyl-S-ACP chain to form the ester product. Intramolecular Dieckmann cyclization catalyzed by the terminal reductase domain releases the product as trihazone A from the PKS-NPRS. The pathway begins with the formation of trihazone A by the hybrid PKS-NRPS synthetase thnA and the trans-enoyl reductase thnE. Trihazone A is further decarboxylated by the 2-oxoglutarate-dependent dioxygenase thnC to produce trihazone D. The function of the FAD-dependent monooxygenase thnD has still to be identified. The polypeptide is Hybrid PKS-NRPS synthetase thnA (Trichoderma harzianum (Hypocrea lixii)).